The following is a 78-amino-acid chain: MTKAPARKPKKKVCVFCKEGITYVDYKDTNLLRKFISDRGKIRARRVTGNCAQHQRDVATAIKNSREMALLPYTNAAR.

The protein belongs to the bacterial ribosomal protein bS18 family. Part of the 30S ribosomal subunit. Forms a tight heterodimer with protein bS6.

In terms of biological role, binds as a heterodimer with protein bS6 to the central domain of the 16S rRNA, where it helps stabilize the platform of the 30S subunit. The chain is Small ribosomal subunit protein bS18 from Acidothermus cellulolyticus (strain ATCC 43068 / DSM 8971 / 11B).